The following is a 135-amino-acid chain: Small ribosomal subunit protein uS9 (135 aa).

The tract at residues 96–135 (SADNRKPLKTEGHLSRDPRAKERRKYGLKKARKAPQFSKR) is disordered. Residues 97-115 (ADNRKPLKTEGHLSRDPRA) are compositionally biased toward basic and acidic residues. Positions 116 to 135 (KERRKYGLKKARKAPQFSKR) are enriched in basic residues.

It belongs to the universal ribosomal protein uS9 family.

The polypeptide is Small ribosomal subunit protein uS9 (Prochlorococcus marinus (strain MIT 9303)).